Consider the following 365-residue polypeptide: tRNA N6-adenosine threonylcarbamoyltransferase (365 aa).

Histidine 119 and histidine 123 together coordinate Fe cation. Substrate-binding positions include 141-145 (LVSGG), aspartate 174, glycine 187, and asparagine 288. Residue aspartate 316 coordinates Fe cation.

The protein belongs to the KAE1 / TsaD family. Fe(2+) is required as a cofactor.

The protein localises to the cytoplasm. The enzyme catalyses L-threonylcarbamoyladenylate + adenosine(37) in tRNA = N(6)-L-threonylcarbamoyladenosine(37) in tRNA + AMP + H(+). In terms of biological role, required for the formation of a threonylcarbamoyl group on adenosine at position 37 (t(6)A37) in tRNAs that read codons beginning with adenine. Is involved in the transfer of the threonylcarbamoyl moiety of threonylcarbamoyl-AMP (TC-AMP) to the N6 group of A37, together with TsaE and TsaB. TsaD likely plays a direct catalytic role in this reaction. The sequence is that of tRNA N6-adenosine threonylcarbamoyltransferase from Agrobacterium fabrum (strain C58 / ATCC 33970) (Agrobacterium tumefaciens (strain C58)).